Consider the following 635-residue polypeptide: Biosynthetic arginine decarboxylase (635 aa).

The residue at position 101 (lysine 101) is an N6-(pyridoxal phosphate)lysine. 284 to 294 is a substrate binding site; that stretch reads VDVGGGLGVDY.

This sequence belongs to the Orn/Lys/Arg decarboxylase class-II family. SpeA subfamily. Mg(2+) is required as a cofactor. The cofactor is pyridoxal 5'-phosphate.

The catalysed reaction is L-arginine + H(+) = agmatine + CO2. It participates in amine and polyamine biosynthesis; agmatine biosynthesis; agmatine from L-arginine: step 1/1. Its function is as follows. Catalyzes the biosynthesis of agmatine from arginine. The polypeptide is Biosynthetic arginine decarboxylase (Tolumonas auensis (strain DSM 9187 / NBRC 110442 / TA 4)).